The chain runs to 225 residues: Probable septum site-determining protein MinC (225 aa).

This sequence belongs to the MinC family. In terms of assembly, interacts with MinD and FtsZ.

Its function is as follows. Cell division inhibitor that blocks the formation of polar Z ring septums. Rapidly oscillates between the poles of the cell to destabilize FtsZ filaments that have formed before they mature into polar Z rings. Prevents FtsZ polymerization. The chain is Probable septum site-determining protein MinC from Listeria welshimeri serovar 6b (strain ATCC 35897 / DSM 20650 / CCUG 15529 / CIP 8149 / NCTC 11857 / SLCC 5334 / V8).